A 135-amino-acid polypeptide reads, in one-letter code: Putative pre-16S rRNA nuclease (135 aa).

Belongs to the YqgF nuclease family.

Its subcellular location is the cytoplasm. Could be a nuclease involved in processing of the 5'-end of pre-16S rRNA. The protein is Putative pre-16S rRNA nuclease of Buchnera aphidicola subsp. Acyrthosiphon pisum (strain 5A).